We begin with the raw amino-acid sequence, 360 residues long: Phosphoserine aminotransferase (360 aa).

Arg-41 contacts L-glutamate. Pyridoxal 5'-phosphate is bound by residues Trp-101, Thr-152, Asp-172, and Gln-195. The residue at position 196 (Lys-196) is an N6-(pyridoxal phosphate)lysine. 237-238 lines the pyridoxal 5'-phosphate pocket; that stretch reads NT.

The protein belongs to the class-V pyridoxal-phosphate-dependent aminotransferase family. SerC subfamily. In terms of assembly, homodimer. Requires pyridoxal 5'-phosphate as cofactor.

It localises to the cytoplasm. It catalyses the reaction O-phospho-L-serine + 2-oxoglutarate = 3-phosphooxypyruvate + L-glutamate. It carries out the reaction 4-(phosphooxy)-L-threonine + 2-oxoglutarate = (R)-3-hydroxy-2-oxo-4-phosphooxybutanoate + L-glutamate. It participates in amino-acid biosynthesis; L-serine biosynthesis; L-serine from 3-phospho-D-glycerate: step 2/3. The protein operates within cofactor biosynthesis; pyridoxine 5'-phosphate biosynthesis; pyridoxine 5'-phosphate from D-erythrose 4-phosphate: step 3/5. Its function is as follows. Catalyzes the reversible conversion of 3-phosphohydroxypyruvate to phosphoserine and of 3-hydroxy-2-oxo-4-phosphonooxybutanoate to phosphohydroxythreonine. The sequence is that of Phosphoserine aminotransferase from Burkholderia ambifaria (strain ATCC BAA-244 / DSM 16087 / CCUG 44356 / LMG 19182 / AMMD) (Burkholderia cepacia (strain AMMD)).